Reading from the N-terminus, the 190-residue chain is Biphenyl-2,3-diol 1,2-dioxygenase 2 (190 aa).

The VOC domain occupies 6-124 (KFAHVVLQTS…DGNFVELQID (119 aa)). Fe cation contacts are provided by H9, H72, and E120.

The protein belongs to the extradiol ring-cleavage dioxygenase family. As to quaternary structure, homohexamer. Fe(2+) serves as cofactor.

The catalysed reaction is biphenyl-2,3-diol + O2 = 2-hydroxy-6-oxo-6-phenylhexa-2,4-dienoate + H(+). It functions in the pathway xenobiotic degradation; biphenyl degradation; 2-hydroxy-2,4-pentadienoate and benzoate from biphenyl: step 3/4. The sequence is that of Biphenyl-2,3-diol 1,2-dioxygenase 2 (bphC2) from Rhodococcus globerulus.